The following is a 229-amino-acid chain: Heptaprenylglyceryl phosphate synthase (229 aa).

Sn-glycerol 1-phosphate is bound at residue Lys-12. Mg(2+) is bound by residues Asp-14 and Ser-40. Sn-glycerol 1-phosphate-binding positions include 159-164 (YLEYSG), Gly-189, and 209-210 (GN).

This sequence belongs to the GGGP/HepGP synthase family. Group I subfamily. As to quaternary structure, homodimer. Requires Mg(2+) as cofactor.

It catalyses the reaction sn-glycerol 1-phosphate + all-trans-heptaprenyl diphosphate = 3-heptaprenyl-sn-glycero-1-phosphate + diphosphate. It functions in the pathway membrane lipid metabolism; glycerophospholipid metabolism. Prenyltransferase that catalyzes in vivo the transfer of the heptaprenyl moiety of heptaprenyl pyrophosphate (HepPP; 35 carbon atoms) to the C3 hydroxyl of sn-glycerol-1-phosphate (G1P), producing heptaprenylglyceryl phosphate (HepGP). This reaction is an ether-bond-formation step in the biosynthesis of archaea-type G1P-based membrane lipids found in Bacillales. In Bacillus anthracis (strain A0248), this protein is Heptaprenylglyceryl phosphate synthase.